Reading from the N-terminus, the 456-residue chain is MHLRIHARRNPPRRPAWTLGIWSLFWGCIVSSVWSSSNVASSSSSPGSHSQHEHHFHGSKHHSVPISIYRSPVSLRGGHAGATYIFGKSGGLILYTWPANDRPSTRSDRLAVGFSTTVKDGILVRIDSAPGLGDFLQLHIEQGKIGVVFNIGTVDISIKEERTPVNDGKYHVVRFTRNGGNATLQVDNWPVNEHYPTGNTDNERFQMVKQKIPFKYNRPVEEWLQEKGRQLTIFNTQAQIAIGGKDKGRLFQGQLSGLYYDGLKVLNMAAENNPNIKINGSVRLVGEVPSILGTTQTTSMPPEMSTTVMETTTTMATTTTRKNRSTASIQPTSDDLVSSAECSSDDEDFVECEPSTANPTEPGVRRVPGASEVIRESSSTTGMVVGIVAAAALCILILLYAMYKYRNRDEGSYQVDETRNYISNSAQSNGTLLKEKPPSSKGGHKKQKNKDKEYYV.

The signal sequence occupies residues 1-35; that stretch reads MHLRIHARRNPPRRPAWTLGIWSLFWGCIVSSVWS. Over 36 to 381 the chain is Extracellular; it reads SSNVASSSSS…EVIRESSSTT (346 aa). Positions 41–63 are disordered; it reads SSSSSPGSHSQHEHHFHGSKHHS. Residues 52–63 show a composition bias toward basic residues; the sequence is HEHHFHGSKHHS. Residues 82 to 282 form the Laminin G-like domain; it reads ATYIFGKSGG…NPNIKINGSV (201 aa). Asp134 and Ile151 together coordinate Ca(2+). N-linked (GlcNAc...) asparagine glycosylation is present at Asn181. Residues Ile233 and Asn235 each coordinate Ca(2+). Residues Asn279 and Asn323 are each glycosylated (N-linked (GlcNAc...) asparagine). The interval 316-340 is disordered; it reads ATTTTRKNRSTASIQPTSDDLVSSA. The segment covering 325 to 340 has biased composition (polar residues); the sequence is STASIQPTSDDLVSSA. A glycan (O-linked (Xyl...) (heparan sulfate) serine) is linked at Ser339. Residues 382-402 form a helical membrane-spanning segment; the sequence is GMVVGIVAAAALCILILLYAM. The Cytoplasmic portion of the chain corresponds to 403–456; that stretch reads YKYRNRDEGSYQVDETRNYISNSAQSNGTLLKEKPPSSKGGHKKQKNKDKEYYV. Residues 424-456 are disordered; sequence NSAQSNGTLLKEKPPSSKGGHKKQKNKDKEYYV.

The protein belongs to the neurexin family. Weakly interacts with CBLN1 and CBLN2. Very weak binding, if any, to CBLN4. Specific isoforms bind neuroligins NLGN1, NLGN2 and NLGN3. Interacts with CLSTN3. In terms of processing, processed by alpha-secretase leading to the formation of an extracellular soluble protein as well as a C-terminal membrane-embedded fragment (CTF). Proteolysis of these CTFs by gamma-secretase releases intracellular domains (ICDs) and extracellular peptides. O-glycosylated; contains heparan sulfate. Heparan sulfate attachment is required for synapse development by mediating interactions with neuroligins.

It is found in the presynaptic cell membrane. It localises to the secreted. Neuronal cell surface protein that may be involved in cell recognition and cell adhesion. May mediate intracellular signaling. Functions as part of a trans-synaptic complex by binding to cerebellins and postsynaptic GRID1. This interaction helps regulate the activity of NMDA and AMPA receptors at hippocampal synapses without affecting synapse formation. NRXN3B-CBLN2-GRID1 complex transduce presynaptic signals into postsynaptic AMPAR response. The protein is Neurexin-3-beta (NRXN3) of Bos taurus (Bovine).